The chain runs to 249 residues: Sesquipedalian-1 (249 aa).

Residues 17-113 form the PH domain; sequence PVDNAGFLYK…WVKALSRASF (97 aa). Disordered regions lie at residues 134–159 and 194–219; these read GGMA…LAPV and EATF…HGPL. Pro residues predominate over residues 140-152; that stretch reads QPQPQSLPLPPSL. Serine 213 carries the post-translational modification Phosphoserine. The short motif at 223–235 is the F&amp;H element; it reads PFARLHECYGQEI.

This sequence belongs to the sesquipedalian family. In terms of assembly, forms homodimers and heterodimers with PHETA2. Interacts with OCRL and INPP5B. Interaction with OCRL may be important for endosomal morphology and function.

Its subcellular location is the early endosome. It localises to the recycling endosome. The protein localises to the golgi apparatus. The protein resides in the trans-Golgi network. It is found in the cytoplasmic vesicle. Its subcellular location is the clathrin-coated vesicle. Plays a role in endocytic trafficking. Required for receptor recycling from endosomes, both to the trans-Golgi network and the plasma membrane. The polypeptide is Sesquipedalian-1 (Homo sapiens (Human)).